Here is a 181-residue protein sequence, read N- to C-terminus: Adenylate kinase (181 aa).

Residue 10 to 15 (GAGKGT) participates in ATP binding. An NMP region spans residues 30 to 59 (STGDLFRYNISNGTELGLEAKKYLDAGDLV). AMP contacts are provided by residues threonine 31, arginine 36, 57–59 (DLV), 85–88 (GYPR), and glutamine 92. The LID stretch occupies residues 126 to 132 (GRGRDDD). Arginine 127 is an ATP binding site. Residues arginine 129 and arginine 140 each contribute to the AMP site. Residue glycine 166 participates in ATP binding.

The protein belongs to the adenylate kinase family. In terms of assembly, monomer.

It localises to the cytoplasm. It catalyses the reaction AMP + ATP = 2 ADP. Its pathway is purine metabolism; AMP biosynthesis via salvage pathway; AMP from ADP: step 1/1. Functionally, catalyzes the reversible transfer of the terminal phosphate group between ATP and AMP. Plays an important role in cellular energy homeostasis and in adenine nucleotide metabolism. The polypeptide is Adenylate kinase (Mycolicibacterium vanbaalenii (strain DSM 7251 / JCM 13017 / BCRC 16820 / KCTC 9966 / NRRL B-24157 / PYR-1) (Mycobacterium vanbaalenii)).